The following is a 269-amino-acid chain: Nitrite transporter NirC (269 aa).

Residues 1-29 (MFTDTINKCAANAARIARLSANNPLGFWV) lie on the Cytoplasmic side of the membrane. The chain crosses the membrane as a helical span at residues 30–46 (SSAMAGAYVGLGIILIF). Topologically, residues 47 to 58 (TLGNLLDPSVRP) are extracellular. The helical transmembrane segment at 59–75 (LVMGATFGIALTLVIIA) threads the bilayer. Over 76–107 (GSELFTGHTMFLTLGVKAGTISHGQMWAILPQ) the chain is Cytoplasmic. The chain crosses the membrane as a helical span at residues 108–125 (TWLGNLVGSVFVALLYSW). Residues 126 to 153 (GGGSLLPVDTSIVHSVALAKTTAPATVL) lie on the Extracellular side of the membrane. A helical transmembrane segment spans residues 154 to 172 (FFKGALCNWLVCLAIWMAI). The Cytoplasmic segment spans residues 173–179 (RTEGTAK). Residues 180–195 (FLAIWWCLLAFIASGY) form a helical membrane-spanning segment. Over 196–230 (EHSVANMTLFALSWFGHHSDAYTLAGIGHNLLWVT) the chain is Extracellular. A helical transmembrane segment spans residues 231–250 (LGNTLSGVVFMGLGYWYATP). The Cytoplasmic segment spans residues 251–269 (KSERPAPAKINQPEAAANN).

The protein belongs to the FNT transporter (TC 1.A.16) family.

It localises to the cell inner membrane. Functionally, catalyzes nitrite uptake and nitrite export across the cytoplasmic membrane. The protein is Nitrite transporter NirC (nirC) of Salmonella typhimurium (strain LT2 / SGSC1412 / ATCC 700720).